Reading from the N-terminus, the 130-residue chain is Small ribosomal subunit protein uS11c (130 aa).

This sequence belongs to the universal ribosomal protein uS11 family. As to quaternary structure, part of the 30S ribosomal subunit.

The protein resides in the plastid. Its subcellular location is the chloroplast. In Nephroselmis olivacea (Green alga), this protein is Small ribosomal subunit protein uS11c.